Consider the following 56-residue polypeptide: Large ribosomal subunit protein bL32 (56 aa).

It belongs to the bacterial ribosomal protein bL32 family.

The chain is Large ribosomal subunit protein bL32 from Synechococcus sp. (strain CC9311).